Consider the following 164-residue polypeptide: General odorant-binding protein 1 (164 aa).

A signal peptide spans 1 to 18; sequence MWKLVVVLTVNLLQGALT. 3 disulfide bridges follow: Cys37/Cys72, Cys68/Cys126, and Cys115/Cys135.

It belongs to the PBP/GOBP family. Homodimer. Antenna.

Its function is as follows. Present in the aqueous fluid surrounding olfactory sensory dendrites and are thought to aid in the capture and transport of hydrophobic odorants into and through this fluid. This chain is General odorant-binding protein 1, found in Bombyx mori (Silk moth).